The following is a 287-amino-acid chain: MNLQTMVDTLQEAAQEAEAIQEEMNEKIERLKAELVVFKGLMSDPMTDLDTKIQEKAMKVDMDICRRIDITAKLCDVAQQRNSEDVSKIFQVVPKKKDRKVASDDDISEQDGEVNRFSDEEVGSMNITDEMKRMFNQLRETFDFDDDCDSLTWEENEDTLLLWEDFTNCNPTIDLQGEQEENLGNLIHETESFFKTRDKEYQETIGQIELELATAKSDMNRHLHEYMEMCSMKRGLDVQMETCRRLIKGSADRNSPSPSSVASSDSGSTDEIQDDLEREADVEPMVS.

The IF rod domain maps to methionine 1–asparagine 254. The disordered stretch occupies residues lysine 248–serine 287. Residues serine 255–glycine 267 show a composition bias toward low complexity. Residues glutamate 271–serine 287 are compositionally biased toward acidic residues.

It belongs to the intermediate filament family.

The chain is Intermediate filament family orphan 2 (Iffo2) from Rattus norvegicus (Rat).